The following is a 402-amino-acid chain: Argininosuccinate synthase (402 aa).

ATP-binding positions include 10–18 (AYSGGLDTS) and A37. L-citrulline is bound by residues Y88 and S93. ATP is bound at residue G118. Residues T120, N124, and D125 each coordinate L-aspartate. Residue N124 participates in L-citrulline binding. L-citrulline contacts are provided by R128, S179, S188, E264, and Y276.

It belongs to the argininosuccinate synthase family. Type 1 subfamily. Homotetramer.

The protein resides in the cytoplasm. The enzyme catalyses L-citrulline + L-aspartate + ATP = 2-(N(omega)-L-arginino)succinate + AMP + diphosphate + H(+). It functions in the pathway amino-acid biosynthesis; L-arginine biosynthesis; L-arginine from L-ornithine and carbamoyl phosphate: step 2/3. In Alkalilimnicola ehrlichii (strain ATCC BAA-1101 / DSM 17681 / MLHE-1), this protein is Argininosuccinate synthase.